An 835-amino-acid polypeptide reads, in one-letter code: Protein translocase subunit SecA (835 aa).

Residues glutamine 85, 103–107 (GEGKT), and aspartate 492 each bind ATP. Residues cysteine 819, cysteine 821, cysteine 830, and cysteine 831 each coordinate Zn(2+).

It belongs to the SecA family. In terms of assembly, monomer and homodimer. Part of the essential Sec protein translocation apparatus which comprises SecA, SecYEG and auxiliary proteins SecDF. Other proteins may also be involved. It depends on Zn(2+) as a cofactor.

It localises to the cell membrane. It is found in the cytoplasm. The enzyme catalyses ATP + H2O + cellular proteinSide 1 = ADP + phosphate + cellular proteinSide 2.. Its function is as follows. Part of the Sec protein translocase complex. Interacts with the SecYEG preprotein conducting channel. Has a central role in coupling the hydrolysis of ATP to the transfer of proteins into and across the cell membrane, serving as an ATP-driven molecular motor driving the stepwise translocation of polypeptide chains across the membrane. The chain is Protein translocase subunit SecA from Clostridium botulinum (strain ATCC 19397 / Type A).